Reading from the N-terminus, the 297-residue chain is Craniofacial development protein 1 (297 aa).

Composition is skewed to acidic residues over residues 1-18 (MEEFDSEDFSTSEEDEDY), 25-43 (YSEDDINELVKEDEVDGEE), and 70-79 (LEEDEEDANE). Disordered regions lie at residues 1 to 157 (MEEF…KPKE) and 190 to 222 (FFKQNEKEKPQSNVPPAVPSLPAGSGLKRSSGM). Phosphoserine is present on residues serine 81, serine 84, and serine 85. A compositionally biased stretch (basic and acidic residues) spans 97–111 (KGVESEDARKKKEDE). Serine 115 bears the Phosphoserine mark. Basic and acidic residues-rich tracts occupy residues 147-157 (VKAERLEKPKE) and 190-199 (FFKQNEKEKP). Lysine 148 is covalently cross-linked (Glycyl lysine isopeptide (Lys-Gly) (interchain with G-Cter in SUMO2)). The hydrophilic stretch occupies residues 176–215 (VIKEVDATSKEAKSFFKQNEKEKPQSNVPPAVPSLPAGSG). At serine 214 the chain carries Phosphoserine. Residues 216–297 (LKRSSGMSSL…RDLRLSKMKP (82 aa)) form the BCNT-C domain. Lysine 217 bears the N6-methyllysine mark. Serine 248 bears the Phosphoserine mark.

In terms of tissue distribution, brain.

Functionally, may play a role during embryogenesis. This Bos taurus (Bovine) protein is Craniofacial development protein 1 (CFDP1).